The following is a 355-amino-acid chain: Chorismate synthase (355 aa).

Residue R48 coordinates NADP(+). FMN-binding positions include 126 to 128 (RSS), G278, 293 to 297 (KPIPS), and R319.

The protein belongs to the chorismate synthase family. Homotetramer. It depends on FMNH2 as a cofactor.

It carries out the reaction 5-O-(1-carboxyvinyl)-3-phosphoshikimate = chorismate + phosphate. It participates in metabolic intermediate biosynthesis; chorismate biosynthesis; chorismate from D-erythrose 4-phosphate and phosphoenolpyruvate: step 7/7. In terms of biological role, catalyzes the anti-1,4-elimination of the C-3 phosphate and the C-6 proR hydrogen from 5-enolpyruvylshikimate-3-phosphate (EPSP) to yield chorismate, which is the branch point compound that serves as the starting substrate for the three terminal pathways of aromatic amino acid biosynthesis. This reaction introduces a second double bond into the aromatic ring system. The polypeptide is Chorismate synthase (Oleidesulfovibrio alaskensis (strain ATCC BAA-1058 / DSM 17464 / G20) (Desulfovibrio alaskensis)).